A 473-amino-acid chain; its full sequence is Cysteine--tRNA ligase (473 aa).

Residue cysteine 27 coordinates Zn(2+). The 'HIGH' region motif lies at 29-39 (ITPYDHVHVGH). Zn(2+) is bound by residues cysteine 213, histidine 238, and glutamate 242. A 'KMSKS' region motif is present at residues 271 to 275 (KMSKS). An ATP-binding site is contributed by lysine 274.

This sequence belongs to the class-I aminoacyl-tRNA synthetase family. Requires Zn(2+) as cofactor.

The protein localises to the cytoplasm. It carries out the reaction tRNA(Cys) + L-cysteine + ATP = L-cysteinyl-tRNA(Cys) + AMP + diphosphate. In Pyrobaculum calidifontis (strain DSM 21063 / JCM 11548 / VA1), this protein is Cysteine--tRNA ligase.